The chain runs to 189 residues: dCTP deaminase (189 aa).

DCTP contacts are provided by residues 112 to 117 (KSTYAR), 136 to 138 (TLE), Q157, Y171, and Q181. The active-site Proton donor/acceptor is the E138.

It belongs to the dCTP deaminase family. Homotrimer.

It catalyses the reaction dCTP + H2O + H(+) = dUTP + NH4(+). The protein operates within pyrimidine metabolism; dUMP biosynthesis; dUMP from dCTP (dUTP route): step 1/2. Functionally, catalyzes the deamination of dCTP to dUTP. The sequence is that of dCTP deaminase from Paraburkholderia xenovorans (strain LB400).